Here is a 907-residue protein sequence, read N- to C-terminus: Valine--tRNA ligase (907 aa).

The short motif at 45–55 is the 'HIGH' region element; it reads PNVTGSLHMGH. The short motif at 554-558 is the 'KMSKS' region element; the sequence is KMSKS. Position 557 (Lys-557) interacts with ATP. The stretch at 838–870 forms a coiled coil; the sequence is GQLIDLEAERARLMKDVSKIEQDIEKLSAKLSN.

It belongs to the class-I aminoacyl-tRNA synthetase family. ValS type 1 subfamily. As to quaternary structure, monomer.

It localises to the cytoplasm. The enzyme catalyses tRNA(Val) + L-valine + ATP = L-valyl-tRNA(Val) + AMP + diphosphate. Its function is as follows. Catalyzes the attachment of valine to tRNA(Val). As ValRS can inadvertently accommodate and process structurally similar amino acids such as threonine, to avoid such errors, it has a 'posttransfer' editing activity that hydrolyzes mischarged Thr-tRNA(Val) in a tRNA-dependent manner. In Bartonella henselae (strain ATCC 49882 / DSM 28221 / CCUG 30454 / Houston 1) (Rochalimaea henselae), this protein is Valine--tRNA ligase.